Consider the following 453-residue polypeptide: Phosphomannomutase (453 aa).

The active-site Phosphoserine intermediate is the Ser96. Residues Ser96, Asp243, Asp245, and Asp247 each contribute to the Mg(2+) site.

Belongs to the phosphohexose mutase family. It depends on Mg(2+) as a cofactor.

The catalysed reaction is alpha-D-mannose 1-phosphate = D-mannose 6-phosphate. It functions in the pathway nucleotide-sugar biosynthesis; GDP-alpha-D-mannose biosynthesis; alpha-D-mannose 1-phosphate from D-fructose 6-phosphate: step 2/2. It participates in bacterial outer membrane biogenesis; LPS O-antigen biosynthesis. Involved in GDP-mannose biosynthesis which serves as the activated sugar nucleotide precursor for mannose residues in cell surface polysaccharides. This enzyme participates in synthesis of the LPS O7 antigen. This Escherichia coli protein is Phosphomannomutase (manB).